Consider the following 359-residue polypeptide: Mitochondrial glutathione transporter SLC25A39 (359 aa).

Residues 1 to 18 (MGDRPAVRISAAITPVQQ) are Mitochondrial intermembrane-facing. Solcar repeat units lie at residues 13-149 (ITPV…LRDF), 157-241 (HGDH…VKAQ), and 251-346 (ASFT…GKTF). Residues 19-39 (MLASGTGAVLTSLFVTPLDVV) form a helical membrane-spanning segment. Residues 40–119 (KIRLQAQQTP…VKITHNEGLR (80 aa)) lie on the Mitochondrial matrix side of the membrane. 4 residues coordinate [2Fe-2S] cluster: C72, C76, C86, and C92. A helical membrane pass occupies residues 120–140 (SLWSGLPPTLVMAVPATVIYF). Residues 141-162 (TCYDQLRDFLCYSMGYHGDHIP) are Mitochondrial intermembrane-facing. The helical transmembrane segment at 163–183 (LIAGGLARLGAVSVISPLELV) threads the bilayer. Topologically, residues 184–212 (RTKMQSRRLQYSELMVCIRSSVAQDGWLS) are mitochondrial matrix. The chain crosses the membrane as a helical span at residues 213 to 233 (LWRGWGPTVLRDVPFSALYWF). The Mitochondrial intermembrane portion of the chain corresponds to 234-253 (NYELVKAQLCEHYRTPQASF). A helical membrane pass occupies residues 254–274 (TISFTAGAVSGAIAAVLTLPF). The Mitochondrial matrix portion of the chain corresponds to 275–316 (DVVKTRRQIQLGEMEALGAVSMKKPSSTWNMMRNIWIDMGYK). Residues 317 to 337 (GLFAGFLPRVIKVAPACAVMI) traverse the membrane as a helical segment. At 338–359 (STYEFGKTFFQERNLHQARCGL) the chain is on the mitochondrial intermembrane side.

This sequence belongs to the mitochondrial carrier (TC 2.A.29) family. Cleaved and degraded by AFG3L2; degradation by AFG3L2 is regulated by the ability of SLC25A39 to bind iron-sulfur. In absence of mitochondrial glutathione, SLC25A39 binds iron-sulfur, preventing cleavage and degradation by AFG3L2. The presence of mitochondrial glutathione prevents iron-sulfur-binding to SLC25A39, promoting cleavage and degradation by AFG3L2.

It localises to the mitochondrion inner membrane. The enzyme catalyses glutathione(in) = glutathione(out). Its activity is regulated as follows. The activity of SLC25A39 is regulated by levels of mitochondrial glutathione via its ability to bind [2Fe-2S] iron-sulfur cluster. Upon physiological levels of mitochondrial glutathione, glutathione prevents iron-sulfur-binding to SLC25A39 promoting cleavage and degradation by AFG3L2. Upon depletion of mitochondrial glutathione, SLC25A39 binds iron-sulfur, preventing cleavage and degradation by AFG3L2. In terms of biological role, mitochondrial transporter required for glutathione import into mitochondria. Glutathione, which plays key roles in oxidative metabolism, is produced exclusively in the cytosol and is imported in many organelles. Mitochondrial glutathione is required for the activity and stability of proteins containing iron-sulfur clusters, as well as erythropoiesis. Involved in the early steps of heme biosynthesis. This is Mitochondrial glutathione transporter SLC25A39 (slc25a39) from Danio rerio (Zebrafish).